We begin with the raw amino-acid sequence, 135 residues long: Large ribosomal subunit protein uL16c (135 aa).

This sequence belongs to the universal ribosomal protein uL16 family. Part of the 50S ribosomal subunit.

It localises to the plastid. Its subcellular location is the chloroplast. This Olimarabidopsis pumila (Dwarf rocket) protein is Large ribosomal subunit protein uL16c.